The sequence spans 136 residues: ATP synthase epsilon chain (136 aa).

This sequence belongs to the ATPase epsilon chain family. In terms of assembly, F-type ATPases have 2 components, CF(1) - the catalytic core - and CF(0) - the membrane proton channel. CF(1) has five subunits: alpha(3), beta(3), gamma(1), delta(1), epsilon(1). CF(0) has three main subunits: a, b and c.

Its subcellular location is the cellular thylakoid membrane. Functionally, produces ATP from ADP in the presence of a proton gradient across the membrane. This Parasynechococcus marenigrum (strain WH8102) protein is ATP synthase epsilon chain.